Consider the following 521-residue polypeptide: MESSCKSWLLCSILVLVAFSLVSASEDEERLVRDLFRGYNKLIRPVQNMTQKVGVRFGLAFVQLINVNEKNQVMKSNVWLRLVWYDYQLQWDEADYGGIGVLRLPPDKVWKPDIVLFNNADGNYEVRYKSNVLIYPTGEVLWVPPAIYQSSCTIDVTYFPFDQQTCIMKFGSWTFNGDQVSLALYNNKNFVDLSDYWKSGTWDIIEVPAYLNVYEGDSNHPTETDITFYIIIRRKTLFYTVNLILPTVLISFLCVLVFYLPAEAGEKVTLGISILLSLVVFLLLVSKILPPTSLVLPLIAKYLLFTFIMNTVSILVTVIIINWNFRGPRTHRMPMYIRSIFLHYLPAFLFMKRPRKTRLRWMMEMPGMSMPAHPHPSYGSPAELPKHISAIGGKQSKMEVMELSDLHHPNCKINRKVNSGGELGLGDGCRRESESSDSILLSPEASKATEAVEFIAEHLRNEDLYIQTREDWKYVAMVIDRLQLYIFFIVTTAGTVGILMDAPHIFEYVDQDRIIEIYRGK.

The N-terminal stretch at 1-24 (MESSCKSWLLCSILVLVAFSLVSA) is a signal peptide. Topologically, residues 25–235 (SEDEERLVRD…ITFYIIIRRK (211 aa)) are extracellular. N48 carries an N-linked (GlcNAc...) asparagine glycan. Cysteines 152 and 166 form a disulfide. The next 3 helical transmembrane spans lie at 236–260 (TLFY…VFYL), 268–286 (VTLG…LLVS), and 302–323 (YLLF…IINW). The Cytoplasmic segment spans residues 324 to 481 (NFRGPRTHRM…WKYVAMVIDR (158 aa)). Residues 482–500 (LQLYIFFIVTTAGTVGILM) traverse the membrane as a helical segment.

This sequence belongs to the ligand-gated ion channel (TC 1.A.9) family. Acetylcholine receptor (TC 1.A.9.1) subfamily. CNS in embryos.

Its subcellular location is the postsynaptic cell membrane. The protein resides in the cell membrane. Functionally, after binding acetylcholine, the AChR responds by an extensive change in conformation that affects all subunits and leads to opening of an ion-conducting channel across the plasma membrane. The protein is Acetylcholine receptor subunit beta-like 1 (nAChRbeta1) of Drosophila melanogaster (Fruit fly).